The chain runs to 118 residues: Late cornified envelope protein 1E (118 aa).

Residues 1–10 are compositionally biased toward low complexity; it reads MSCQQSQQQC. 2 disordered regions span residues 1–23 and 84–118; these read MSCQ…CPPK and RSHR…GGCC. The span at 11–23 shows a compositional bias: pro residues; that stretch reads QPPPKCTPKCPPK. The segment covering 92–103 has biased composition (low complexity); that stretch reads SSDCCSQPSGGS. Positions 104-118 are enriched in gly residues; it reads SCCGGGSGQHSGGCC.

It belongs to the LCE family. In terms of assembly, interacts with CYSRT1. As to expression, skin-specific. Expression was readily detected in adult trunk skin, adult arm skin, fetal skin, penal skin, vulva, esophagus and tongue. Not expressed in the cervix, rectum, lung, colon, or placenta.

Its function is as follows. Precursors of the cornified envelope of the stratum corneum. The chain is Late cornified envelope protein 1E (LCE1E) from Homo sapiens (Human).